The sequence spans 444 residues: Probable kynurenine--oxoglutarate transaminase BNA3 (444 aa).

Lysine 271 carries the N6-(pyridoxal phosphate)lysine modification.

The protein belongs to the class-I pyridoxal-phosphate-dependent aminotransferase family. Homodimer. It depends on pyridoxal 5'-phosphate as a cofactor.

It is found in the cytoplasm. The protein localises to the mitochondrion. It carries out the reaction L-kynurenine + 2-oxoglutarate = kynurenate + L-glutamate + H2O. Its pathway is amino-acid degradation; L-kynurenine degradation; kynurenate from L-kynurenine: step 1/2. Its function is as follows. Catalyzes the irreversible transamination of the L-tryptophan metabolite L-kynurenine to form kynurenic acid (KA). This is Probable kynurenine--oxoglutarate transaminase BNA3 (BNA3) from Saccharomyces cerevisiae (strain ATCC 204508 / S288c) (Baker's yeast).